Reading from the N-terminus, the 209-residue chain is Glutathione S-transferase 1, isoform C (209 aa).

The GST N-terminal domain occupies 1–80; sequence MDFYYLPGSA…YLAEKYGKDD (80 aa). Glutathione contacts are provided by residues Ser9, 50–52, and 64–66; these read HCI and ESR. A GST C-terminal domain is found at 86–207; the sequence is DPQKRAVVNQ…AGIEEFKKYF (122 aa).

The protein belongs to the GST superfamily. Theta family. Homodimer.

The enzyme catalyses RX + glutathione = an S-substituted glutathione + a halide anion + H(+). It catalyses the reaction 1,1,1-trichloro-2,2-bis(4-chlorophenyl)ethane = 1,1-dichloro-2,2-bis(4-chlorophenyl)ethylene + chloride + H(+). Conjugation of reduced glutathione to a wide number of exogenous and endogenous hydrophobic electrophiles. Has DDT dehydrochlorinase activity. The chain is Glutathione S-transferase 1, isoform C (GstD1) from Anopheles gambiae (African malaria mosquito).